We begin with the raw amino-acid sequence, 375 residues long: Succinyl-diaminopimelate desuccinylase (375 aa).

H66 contributes to the Zn(2+) binding site. The active site involves D68. D99 lines the Zn(2+) pocket. The Proton acceptor role is filled by E133. 3 residues coordinate Zn(2+): E134, E162, and H348.

This sequence belongs to the peptidase M20A family. DapE subfamily. Homodimer. Requires Zn(2+) as cofactor. Co(2+) is required as a cofactor.

The catalysed reaction is N-succinyl-(2S,6S)-2,6-diaminopimelate + H2O = (2S,6S)-2,6-diaminopimelate + succinate. The protein operates within amino-acid biosynthesis; L-lysine biosynthesis via DAP pathway; LL-2,6-diaminopimelate from (S)-tetrahydrodipicolinate (succinylase route): step 3/3. Its function is as follows. Catalyzes the hydrolysis of N-succinyl-L,L-diaminopimelic acid (SDAP), forming succinate and LL-2,6-diaminopimelate (DAP), an intermediate involved in the bacterial biosynthesis of lysine and meso-diaminopimelic acid, an essential component of bacterial cell walls. The sequence is that of Succinyl-diaminopimelate desuccinylase from Buchnera aphidicola subsp. Acyrthosiphon pisum (strain APS) (Acyrthosiphon pisum symbiotic bacterium).